Reading from the N-terminus, the 549-residue chain is Probable protein kinase UbiB (549 aa).

Positions 123–501 (DFEDTPLASA…QQKAHKSNYL (379 aa)) constitute a Protein kinase domain. Residues 129 to 137 (LASASISQV) and lysine 152 contribute to the ATP site. The Proton acceptor role is filled by aspartate 287. The next 2 membrane-spanning stretches (helical) occupy residues 498-518 (SNYL…LLNQ) and 520-540 (ATLW…VLGW).

The protein belongs to the ABC1 family. UbiB subfamily.

It localises to the cell inner membrane. Its pathway is cofactor biosynthesis; ubiquinone biosynthesis [regulation]. Is probably a protein kinase regulator of UbiI activity which is involved in aerobic coenzyme Q (ubiquinone) biosynthesis. The chain is Probable protein kinase UbiB from Shewanella piezotolerans (strain WP3 / JCM 13877).